Here is a 426-residue protein sequence, read N- to C-terminus: Lactate racemase (426 aa).

72 to 75 (DHTR) provides a ligand contact to Ni(II)-pyridinium-3,5-bisthiocarboxylate mononucleotide. Active-site proton donor/acceptor residues include histidine 108 and histidine 174. Residues lysine 184 and histidine 200 each coordinate Ni(II)-pyridinium-3,5-bisthiocarboxylate mononucleotide. Glutamine 295 and lysine 298 together coordinate substrate.

It belongs to the lactate racemase family. Homodimer. Requires Ni(II)-pyridinium-3,5-bisthiocarboxylate mononucleotide as cofactor.

It carries out the reaction (S)-lactate = (R)-lactate. Its activity is regulated as follows. Activation of the apo-enzyme requires the three accessory proteins LarB, LarE and LarC, that are involved in the biosynthesis of the nickel-pincer cofactor of LarA. Its function is as follows. Catalyzes the interconversion between the D- and L-isomers of lactate. This chain is Lactate racemase, found in Thermoanaerobacterium thermosaccharolyticum (strain ATCC 7956 / DSM 571 / NCIMB 9385 / NCA 3814 / NCTC 13789 / WDCM 00135 / 2032) (Clostridium thermosaccharolyticum).